The following is a 130-amino-acid chain: Small ribosomal subunit protein uS9 (130 aa).

It belongs to the universal ribosomal protein uS9 family.

This Oceanobacillus iheyensis (strain DSM 14371 / CIP 107618 / JCM 11309 / KCTC 3954 / HTE831) protein is Small ribosomal subunit protein uS9.